Here is a 249-residue protein sequence, read N- to C-terminus: Phosphoserine phosphatase (249 aa).

The protein belongs to the HAD-like hydrolase superfamily. As to quaternary structure, homodimer. Mg(2+) serves as cofactor. Co(2+) is required as a cofactor.

The enzyme catalyses O-phospho-L-serine + H2O = L-serine + phosphate. It catalyses the reaction O-phospho-D-serine + H2O = D-serine + phosphate. Its pathway is amino-acid biosynthesis; L-serine biosynthesis; L-serine from 3-phospho-D-glycerate: step 3/3. Functionally, catalyzes the last step of the phosphorylated serine biosynthetic pathway, i.e. dephosphorylation of O-phospho-L-serine to form L-serine. Is also able to dephosphorylate O-phospho-D-serine with similar efficiency. Displays a poor activity on L-phosphothreonine, and cannot use L-phosphotyrosine, pyridoxal phosphate, glucose 6-phosphate, or fructose 6-phosphate as substrates. The sequence is that of Phosphoserine phosphatase from Thermus thermophilus (strain ATCC BAA-163 / DSM 7039 / HB27).